Here is a 2896-residue protein sequence, read N- to C-terminus: Hemocyanin G-type, units Oda to Odg (2896 aa).

The segment at 1–419 is functional unit Oda; sequence NLIRKDVDAL…ADMVVVDKTG (419 aa). His41 is a binding site for Cu cation. Cys47 and Cys57 form a disulfide bridge. Positions 58–60 form a cross-link, 2'-(S-cysteinyl)-histidine (Cys-His); that stretch reads CLH. The Cu cation site is built by His60, His69, His178, His182, and His209. 2 cysteine pairs are disulfide-bonded: Cys168–Cys234 and Cys321–Cys333. N-linked (GlcNAc...) asparagine glycosylation is present at Asn386. The tract at residues 420-834 is functional unit Odb; the sequence is LNVRKDLQSL…KESGVVFDEL (415 aa). A Cu cation-binding site is contributed by His460. A disulfide bridge links Cys466 with Cys477. Residues 478–480 constitute a cross-link (2'-(S-cysteinyl)-histidine (Cys-His)); it reads CVH. The Cu cation site is built by His480, His489, His601, His605, and His632. A disulfide bond links Cys591 and Cys657. Residue Asn804 is glycosylated (N-linked (GlcNAc...) asparagine). The segment at 835–1254 is functional unit Odc; the sequence is YRSRRDVSSL…GIWVEPVTSA (420 aa). His875 provides a ligand contact to Cu cation. Cys881 and Cys892 are joined by a disulfide. Residues 893 to 895 constitute a cross-link (2'-(S-cysteinyl)-histidine (Cys-His)); it reads CHH. Cu cation contacts are provided by His895, His904, His1013, His1017, His1044, and His1292. Cys1003 and Cys1070 form a disulfide bridge. Residues 1255-1667 form a functional unit Odd region; it reads NRIRKNLNAL…ADIKSEEGNE (413 aa). Cysteines 1298 and 1309 form a disulfide. The segment at residues 1310-1312 is a cross-link (2'-(S-cysteinyl)-histidine (Cys-His)); the sequence is CIH. The Cu cation site is built by His1312, His1321, His1425, His1429, and His1456. Cys1415 and Cys1482 form a disulfide bridge. N-linked (GlcNAc...) asparagine glycosylation occurs at Asn1496. Cys1571 and Cys1581 are disulfide-bonded. Asn1634 carries N-linked (GlcNAc...) asparagine glycosylation. The functional unit Ode stretch occupies residues 1668–2085; the sequence is YLVRKNVERL…NEDADIDTPL (418 aa). His1708 lines the Cu cation pocket. A disulfide bridge connects residues Cys1714 and Cys1725. Residues 1726 to 1728 constitute a cross-link (2'-(S-cysteinyl)-histidine (Cys-His)); sequence CLH. Residues His1728, His1737, His1849, His1853, and His1880 each contribute to the Cu cation site. 2 disulfides stabilise this stretch: Cys1839–Cys1906 and Cys1997–Cys2003. N-linked (GlcNAc...) asparagine glycosylation occurs at Asn2055. Positions 2086-2502 are functional unit Odf; it reads NHIRRNVESL…REVHKKTVGD (417 aa). His2126 is a Cu cation binding site. A disulfide bridge links Cys2131 with Cys2141. The segment at residues 2142 to 2144 is a cross-link (2'-(S-cysteinyl)-histidine (Cys-His)); sequence CLH. Cu cation is bound by residues His2144 and His2153. Residue Asn2201 is glycosylated (N-linked (GlcNAc...) asparagine). Cystine bridges form between Cys2252–Cys2319 and Cys2406–Cys2411. Cu cation-binding residues include His2262, His2266, and His2293. Residues 2503 to 2896 are functional unit Odg; sequence AIIRKNVNSL…VFLAPAKTTH (394 aa). Position 2543 (His2543) interacts with Cu cation. The cysteines at positions 2549 and 2559 are disulfide-linked. Asn2553 carries N-linked (GlcNAc...) asparagine glycosylation. The segment at residues 2560–2562 is a cross-link (2'-(S-cysteinyl)-histidine (Cys-His)); that stretch reads CQH. Residues His2562, His2571, His2671, His2675, and His2702 each contribute to the Cu cation site. Intrachain disulfides connect Cys2661-Cys2728 and Cys2815-Cys2821.

Belongs to the tyrosinase family. Hemocyanin subfamily. In terms of assembly, decamers of large identical subunits (350 kDa), each containing 7 globular oxygen-binding functional units: ODA, ODB, ODC, ODD, ODE, ODF, and ODG. Decamer formation requires the presence of magnesium ions. The cofactor is Cu(2+).

Its function is as follows. Hemocyanins are copper-containing oxygen carriers occurring freely dissolved in the hemolymph of many mollusks and arthropods. This chain is Hemocyanin G-type, units Oda to Odg (ODHCY), found in Enteroctopus dofleini (North Pacific giant octopus).